The following is a 616-amino-acid chain: Chaperone protein HscA (616 aa).

The protein belongs to the heat shock protein 70 family.

Chaperone involved in the maturation of iron-sulfur cluster-containing proteins. Has a low intrinsic ATPase activity which is markedly stimulated by HscB. Involved in the maturation of IscU. The sequence is that of Chaperone protein HscA from Salmonella typhimurium (strain LT2 / SGSC1412 / ATCC 700720).